The primary structure comprises 332 residues: FAD-dependent monooxygenase elcE (332 aa).

It belongs to the oxygen-dependent FAD-linked oxidoreductase family.

It functions in the pathway secondary metabolite biosynthesis. In terms of biological role, FAD-dependent monooxygenase; part of the gene cluster that mediates the biosynthesis of elsinochrome C, a perelyenequinone phytotoxin structurally similar to cercosporin. The first step of elsinochrome C biosynthesis is performed by the polyketide synthase elcA which catalyzes the formation of nor-toralactone. The starter unit acyltransferase (SAT) domain of elcA initiates polyketide extension by the selective utilization of acetyl-CoA, which is elongated to the heptaketide in the beta-ketoacyl synthase (KS) domain by successive condensations with six malonyl units introduced by the malonyl acyltransferase (MAT) domain. The product template (PT) domain catalyzes C4-C9 and C2-C11 aldol cyclizations and dehydrations to a trihydroxynaphthalene, which is thought to be delivered to the thioesterase (TE) domain for product release. The bifunctional enzyme elcB then methylates nor-toralactone to toralactone before conducting an unusual oxidative aromatic ring opening. The next step in perylenequinone biosynthesis is an O-methylation at the nascent OH-6 of the elcB product performed by the O-methyltransferase elcD. The oxidative coupling of the two monomeric naphthol units in perylenequinone biosynthesis is catalyzed by the FAD-dependent monooxygenase elcE and the multicopper oxidase elcG. ElcG might catalyze the first intermolecular coupling in a regio- and stereo-selective manner via a phenol radical coupling mechanism and the elcE could forge the second C-C bond intramolecularly via a hydride transfer mechanism. The fasciclin domain-containing protein elcF might also play a role duting this step. The last piece of the puzzle in the biosynthesis of elsinochrome C is the additional annulation by enolate coupling to afford the dihydrobenzo(ghi)perylenequinone system, catalyzed by the FAD-dependent monooxygenase elcH. In Phaeosphaeria nodorum (strain SN15 / ATCC MYA-4574 / FGSC 10173) (Glume blotch fungus), this protein is FAD-dependent monooxygenase elcE.